The chain runs to 303 residues: UDP-3-O-acyl-N-acetylglucosamine deacetylase (303 aa).

Positions 78, 237, and 241 each coordinate Zn(2+). Histidine 264 serves as the catalytic Proton donor.

The protein belongs to the LpxC family. Zn(2+) is required as a cofactor.

The enzyme catalyses a UDP-3-O-[(3R)-3-hydroxyacyl]-N-acetyl-alpha-D-glucosamine + H2O = a UDP-3-O-[(3R)-3-hydroxyacyl]-alpha-D-glucosamine + acetate. It participates in glycolipid biosynthesis; lipid IV(A) biosynthesis; lipid IV(A) from (3R)-3-hydroxytetradecanoyl-[acyl-carrier-protein] and UDP-N-acetyl-alpha-D-glucosamine: step 2/6. Its function is as follows. Catalyzes the hydrolysis of UDP-3-O-myristoyl-N-acetylglucosamine to form UDP-3-O-myristoylglucosamine and acetate, the committed step in lipid A biosynthesis. This is UDP-3-O-acyl-N-acetylglucosamine deacetylase from Xanthomonas axonopodis pv. citri (strain 306).